A 236-amino-acid polypeptide reads, in one-letter code: Small ribosomal subunit protein uS3 (236 aa).

Residues 39 to 107 (VRHFLMQKLS…PTQLNIAEVR (69 aa)) enclose the KH type-2 domain.

This sequence belongs to the universal ribosomal protein uS3 family. In terms of assembly, part of the 30S ribosomal subunit. Forms a tight complex with proteins S10 and S14.

Binds the lower part of the 30S subunit head. Binds mRNA in the 70S ribosome, positioning it for translation. This is Small ribosomal subunit protein uS3 from Blochmanniella pennsylvanica (strain BPEN).